The chain runs to 205 residues: Phosphoribosyl-dephospho-CoA transferase (205 aa).

Residues aspartate 134 and aspartate 136 contribute to the active site.

It belongs to the MdcG family.

The enzyme catalyses apo-[malonate decarboxylase ACP] + 2'-(5''-triphospho-alpha-D-ribosyl)-3'-dephospho-CoA = holo-[malonate decarboxylase ACP] + diphosphate. Its function is as follows. Transfers 2'-(5-triphosphoribosyl)-3'-dephosphocoenzyme-A to the apo-[acyl-carrier-protein] of the malonate decarboxylase to yield holo-[acyl-carrier-protein]. This is Phosphoribosyl-dephospho-CoA transferase from Klebsiella pneumoniae subsp. pneumoniae (strain ATCC 700721 / MGH 78578).